Here is a 594-residue protein sequence, read N- to C-terminus: Arrestin domain-containing protein C584.15c (594 aa).

Over residues 368–398 (NPQLQSGFTTPNLSRRNSSDFGPNSPVNIHS) the composition is skewed to polar residues. Disordered regions lie at residues 368–417 (NPQL…NSNA) and 531–594 (EATR…RGVR). Positions 404–417 (SGQQPSSPASNSNA) are enriched in low complexity. The segment covering 534-552 (RPSSPTESVEIPSNTTTIA) has biased composition (polar residues). Pro residues predominate over residues 565-574 (PSTPAPPLPS). Residue S584 is modified to Phosphoserine.

Belongs to the arrestin family.

This Schizosaccharomyces pombe (strain 972 / ATCC 24843) (Fission yeast) protein is Arrestin domain-containing protein C584.15c.